Reading from the N-terminus, the 323-residue chain is Serine/threonine-protein phosphatase PP1-gamma catalytic subunit (323 aa).

The residue at position 2 (Ala2) is an N-acetylalanine. The Mn(2+) site is built by Asp64, His66, Asp92, and Asn124. The Proton donor role is filled by His125. Mn(2+)-binding residues include His173 and His248. The interval 302–323 (KKPNATRPVTPPRGMITKQAKK) is disordered. Thr307 and Thr311 each carry phosphothreonine.

It belongs to the PPP phosphatase family. PP-1 subfamily. PP1 comprises a catalytic subunit, PPP1CA, PPP1CB or PPP1CC, which is folded into its native form by inhibitor 2 and glycogen synthetase kinase 3, and then complexed to one or several targeting or regulatory subunits. PPP1R12A, PPP1R12B and PPP1R12C mediate binding to myosin. PPP1R3A (in skeletal muscle), PPP1R3B (in sliver), PPP1R3C, PPP1R3D and PPP1R3F (in brain) mediate binding to glycogen. PPP1R15A and PPP1R15B mediate binding to EIF2S1. Part of a complex containing PPP1R15B, PP1 and NCK1/2. Interacts with PPP1R3B, PPP1R7 and CDCA2. Isoform 2 interacts with SPZ1. Interacts with IKFZ1; the interaction targets PPP1CC to pericentromeric heterochromatin, dephosphorylates IKAROS, stabilizes it and prevents it from degradation. Interacts with NOM1 and PPP1R8. Component of the PTW/PP1 phosphatase complex, composed of PPP1R10/PNUTS, TOX4, WDR82, and PPP1CA or PPP1CB or PPP1CC. Interacts with PPP1R8. Interacts with NEK2. Interacts with URI1; the interaction is phosphorylation-dependent and occurs in a growth factor-dependent manner. Interacts with FOXP3. Interacts with TMEM225 (via RVxF motif). Interacts with MKI67. Interacts with RRP1B; this targets PPP1CC to the nucleolus. Found in a complex with PPP1CA, PPP1CC, SHC1 and PEAK1. Interacts with DYNLT4. Interacts (via RVxF motif) with FIRRM; regulates PLK1 kinase activity. Interacts with the KNL1 complex subunit KNL1; the interaction is direct and mutually exclusive with KNL1 binding to microtubules. Component of the SHOC2-MRAS-PP1c (SMP) complex consisting of SHOC2, GTP-bound M-Ras/MRAS and the catalytic subunit of protein phosphatase 1 (either PPP1CA, PPP1CB or PPP1CC). SHOC2 and PP1c preferably bind M-Ras/MRAS, but they also bind K-Ras/KRAS, N-Ras/NRAS and H-Ras/HRAS; these interactions are GTP-dependent and both SHOC2 and PP1c are required to form a stable complex. Interacts with SHOC2 in the absence of Ras GTPases. It depends on Mn(2+) as a cofactor. In terms of processing, phosphorylated by NEK2. Isoform 2 is expressed only in testis, in the late spermatocytes and early spematids (at protein level).

It is found in the cytoplasm. The protein resides in the nucleus. It localises to the cleavage furrow. Its subcellular location is the nucleolus. The protein localises to the nucleoplasm. It is found in the chromosome. The protein resides in the centromere. It localises to the kinetochore. Its subcellular location is the nucleus speckle. The protein localises to the midbody. It is found in the mitochondrion. The protein resides in the cytoskeleton. It localises to the microtubule organizing center. The catalysed reaction is O-phospho-L-seryl-[protein] + H2O = L-seryl-[protein] + phosphate. The enzyme catalyses O-phospho-L-threonyl-[protein] + H2O = L-threonyl-[protein] + phosphate. Inactivated by binding to URI1. In terms of biological role, protein phosphatase that associates with over 200 regulatory proteins to form highly specific holoenzymes which dephosphorylate hundreds of biological targets. Protein phosphatase 1 (PP1) is essential for cell division, and participates in the regulation of glycogen metabolism, muscle contractility and protein synthesis. Dephosphorylates RPS6KB1. Involved in regulation of ionic conductances and long-term synaptic plasticity. May play an important role in dephosphorylating substrates such as the postsynaptic density-associated Ca(2+)/calmodulin dependent protein kinase II. Component of the PTW/PP1 phosphatase complex, which plays a role in the control of chromatin structure and cell cycle progression during the transition from mitosis into interphase. In balance with CSNK1D and CSNK1E, determines the circadian period length, through the regulation of the speed and rhythmicity of PER1 and PER2 phosphorylation. May dephosphorylate CSNK1D and CSNK1E. Regulates the recruitment of the SKA complex to kinetochores. Core component of the SHOC2-MRAS-PP1c (SMP) holophosphatase complex that regulates the MAPK pathway activation. Dephosphorylates MKI67 at the onset of anaphase. The SMP complex specifically dephosphorylates the inhibitory phosphorylation at 'Ser-259' of RAF1 kinase, 'Ser-365' of BRAF kinase and 'Ser-214' of ARAF kinase, stimulating their kinase activities. The SMP complex enhances the dephosphorylation activity and substrate specificity of PP1c. Required for normal male fertility. The chain is Serine/threonine-protein phosphatase PP1-gamma catalytic subunit (Ppp1cc) from Rattus norvegicus (Rat).